A 427-amino-acid polypeptide reads, in one-letter code: MDLNIKLDKSGELFNESKKYLVGGVNSPVRSFKPFPFFVKSAKSCFLYDEDGNEFIDYCLAYGPMVLGHANEKILNAVKEQMDFGTAYGVPSEKEIILAKEVINRIPCAEMVRFVNSGTEATMGAIRLARGVTKRNKIIKFEGAFHGAHDYVLVKSGSGALTHGAPNSPGIPEDTTKNTLLIPFNDEGAVRKVISENKGEIACIILEPMMGNVGCILPKDGYLKFLREITEENGIILIFDEVITGFRLSKGGAQEYYGVKADIATLGKILGGGFPIGAIAGKKELMEQFSPKGQVYQAGTFNGNPISVTAGIETLKNLNNAFYKETAKKAEILSNYLIETTEKYKIPARVYSVASIFQVYFNDKDILTYDDAKSSDTEKFMKYFYSLLENGVFIPPSQFECCFTSIKHDDFVLEKTMNAIDIAMKKL.

Lysine 268 is subject to N6-(pyridoxal phosphate)lysine.

Belongs to the class-III pyridoxal-phosphate-dependent aminotransferase family. HemL subfamily. Pyridoxal 5'-phosphate is required as a cofactor.

The protein localises to the cytoplasm. It carries out the reaction (S)-4-amino-5-oxopentanoate = 5-aminolevulinate. Its pathway is porphyrin-containing compound metabolism; protoporphyrin-IX biosynthesis; 5-aminolevulinate from L-glutamyl-tRNA(Glu): step 2/2. The chain is Glutamate-1-semialdehyde 2,1-aminomutase from Methanococcus vannielii (strain ATCC 35089 / DSM 1224 / JCM 13029 / OCM 148 / SB).